A 325-amino-acid chain; its full sequence is ATP-dependent 6-phosphofructokinase (325 aa).

Gly-12 provides a ligand contact to ATP. ADP is bound at residue 22 to 26; the sequence is RTIVK. ATP-binding positions include 73–74 and 103–106; these read RY and GDGS. Asp-104 lines the Mg(2+) pocket. 126–128 serves as a coordination point for substrate; the sequence is TID. The active-site Proton acceptor is Asp-128. Residue Arg-155 coordinates ADP. Position 170–172 (170–172) interacts with substrate; the sequence is MGH. Residues 186–188, Lys-213, and 215–217 each bind ADP; these read GAE and KRS. Substrate-binding positions include Glu-224, Arg-246, and 252–255; that span reads HTQR.

Belongs to the phosphofructokinase type A (PFKA) family. ATP-dependent PFK group I subfamily. Prokaryotic clade 'B1' sub-subfamily. In terms of assembly, homotetramer. It depends on Mg(2+) as a cofactor.

The protein resides in the cytoplasm. It carries out the reaction beta-D-fructose 6-phosphate + ATP = beta-D-fructose 1,6-bisphosphate + ADP + H(+). The protein operates within carbohydrate degradation; glycolysis; D-glyceraldehyde 3-phosphate and glycerone phosphate from D-glucose: step 3/4. With respect to regulation, allosterically activated by ADP and other diphosphonucleosides, and allosterically inhibited by phosphoenolpyruvate. In terms of biological role, catalyzes the phosphorylation of D-fructose 6-phosphate to fructose 1,6-bisphosphate by ATP, the first committing step of glycolysis. The polypeptide is ATP-dependent 6-phosphofructokinase (Mycoplasma mobile (strain ATCC 43663 / 163K / NCTC 11711) (Mesomycoplasma mobile)).